The following is a 436-amino-acid chain: ATP-dependent 6-phosphofructokinase (436 aa).

ATP is bound by residues Gly90, 155 to 156, and 180 to 183; these read RG and GDGT. A Mg(2+)-binding site is contributed by Asp181. Residues 209 to 211, 254 to 256, Glu307, and 362 to 365 contribute to the substrate site; these read TID, MGR, and YMIR. Asp211 (proton acceptor) is an active-site residue.

It belongs to the phosphofructokinase type A (PFKA) family. PPi-dependent PFK group II subfamily. Atypical ATP-dependent clade 'X' sub-subfamily. As to quaternary structure, homodimer. Aggregates to a homotetramer after activation by ATP. Mg(2+) serves as cofactor.

The protein resides in the cytoplasm. The enzyme catalyses beta-D-fructose 6-phosphate + ATP = beta-D-fructose 1,6-bisphosphate + ADP + H(+). Its pathway is carbohydrate degradation; glycolysis; D-glyceraldehyde 3-phosphate and glycerone phosphate from D-glucose: step 3/4. Activated by nucleoside triphosphates. Inhibited by phosphoenolpyruvate. EDTA and biphosphonates play the role of inhibitors of kinase activity. Catalyzes the phosphorylation of D-fructose 6-phosphate to fructose 1,6-bisphosphate by ATP, the first committing step of glycolysis. The polypeptide is ATP-dependent 6-phosphofructokinase (PPi-PFK) (Entamoeba histolytica (strain ATCC 30459 / HM-1:IMSS / ABRM)).